We begin with the raw amino-acid sequence, 132 residues long: Fatty acid-binding protein, adipocyte (132 aa).

Cys2 carries the post-translational modification N-acetylcysteine. Ser13 carries the post-translational modification Phosphoserine. Tyr20 carries the phosphotyrosine; by Tyr-kinases modification. Residues 22 to 32 (KEVGVGFATRK) carry the Nuclear localization signal motif. 127–129 (RVY) is an a fatty acid binding site.

This sequence belongs to the calycin superfamily. Fatty-acid binding protein (FABP) family. Monomer. Homodimer. Interacts with PPARG.

It localises to the cytoplasm. Its subcellular location is the nucleus. Lipid transport protein in adipocytes. Binds both long chain fatty acids and retinoic acid. Delivers long-chain fatty acids and retinoic acid to their cognate receptors in the nucleus. The polypeptide is Fatty acid-binding protein, adipocyte (FABP4) (Cervus elaphus (Red deer)).